Reading from the N-terminus, the 1363-residue chain is DNA-directed RNA polymerase subunit beta' (1363 aa).

The segment at 1–39 is disordered; that stretch reads MTSTPSKSRKSSKGSKAAKAAASAPETRPLAKTPPPFRN. Positions 14 to 24 are enriched in low complexity; that stretch reads GSKAAKAAASA. Residues Cys248, Cys315, Cys322, and Cys325 each contribute to the Zn(2+) site.

It belongs to the RNA polymerase beta' chain family. RpoC2 subfamily. In cyanobacteria the RNAP catalytic core is composed of 2 alpha, 1 beta, 1 beta', 1 gamma and 1 omega subunit. When a sigma factor is associated with the core the holoenzyme is formed, which can initiate transcription. Zn(2+) is required as a cofactor.

It catalyses the reaction RNA(n) + a ribonucleoside 5'-triphosphate = RNA(n+1) + diphosphate. In terms of biological role, DNA-dependent RNA polymerase catalyzes the transcription of DNA into RNA using the four ribonucleoside triphosphates as substrates. This chain is DNA-directed RNA polymerase subunit beta', found in Synechococcus sp. (strain WH7803).